Reading from the N-terminus, the 417-residue chain is Serine hydroxymethyltransferase (417 aa).

K54 carries the post-translational modification N6-acetyllysine. (6S)-5,6,7,8-tetrahydrofolate contacts are provided by residues L121 and G125–L127. K229 bears the N6-(pyridoxal phosphate)lysine mark. 3 positions are modified to N6-acetyllysine: K250, K285, and K354. S355–F357 is a (6S)-5,6,7,8-tetrahydrofolate binding site. K375 carries the N6-acetyllysine modification.

It belongs to the SHMT family. As to quaternary structure, homodimer. Pyridoxal 5'-phosphate is required as a cofactor.

Its subcellular location is the cytoplasm. It carries out the reaction (6R)-5,10-methylene-5,6,7,8-tetrahydrofolate + glycine + H2O = (6S)-5,6,7,8-tetrahydrofolate + L-serine. The protein operates within one-carbon metabolism; tetrahydrofolate interconversion. Its pathway is amino-acid biosynthesis; glycine biosynthesis; glycine from L-serine: step 1/1. Catalyzes the reversible interconversion of serine and glycine with tetrahydrofolate (THF) serving as the one-carbon carrier. This reaction serves as the major source of one-carbon groups required for the biosynthesis of purines, thymidylate, methionine, and other important biomolecules. Also exhibits THF-independent aldolase activity toward beta-hydroxyamino acids, producing glycine and aldehydes, via a retro-aldol mechanism. The sequence is that of Serine hydroxymethyltransferase from Escherichia coli O1:K1 / APEC.